The sequence spans 475 residues: Glycogen synthase (475 aa).

K15 contacts ADP-alpha-D-glucose.

It belongs to the glycosyltransferase 1 family. Bacterial/plant glycogen synthase subfamily.

It catalyses the reaction [(1-&gt;4)-alpha-D-glucosyl](n) + ADP-alpha-D-glucose = [(1-&gt;4)-alpha-D-glucosyl](n+1) + ADP + H(+). The protein operates within glycan biosynthesis; glycogen biosynthesis. Its function is as follows. Synthesizes alpha-1,4-glucan chains using ADP-glucose. The protein is Glycogen synthase of Anaeromyxobacter dehalogenans (strain 2CP-C).